The chain runs to 256 residues: Type III pantothenate kinase (256 aa).

6 to 13 (DVGNSNIV) lines the ATP pocket. Substrate-binding positions include Tyr-100 and 107–110 (GADR). Asp-109 (proton acceptor) is an active-site residue. Asp-129 is a K(+) binding site. Thr-132 provides a ligand contact to ATP. A substrate-binding site is contributed by Thr-184.

This sequence belongs to the type III pantothenate kinase family. Homodimer. The cofactor is NH4(+). It depends on K(+) as a cofactor.

It is found in the cytoplasm. The catalysed reaction is (R)-pantothenate + ATP = (R)-4'-phosphopantothenate + ADP + H(+). Its pathway is cofactor biosynthesis; coenzyme A biosynthesis; CoA from (R)-pantothenate: step 1/5. Functionally, catalyzes the phosphorylation of pantothenate (Pan), the first step in CoA biosynthesis. The protein is Type III pantothenate kinase of Geotalea daltonii (strain DSM 22248 / JCM 15807 / FRC-32) (Geobacter daltonii).